Here is a 369-residue protein sequence, read N- to C-terminus: Putative F-box protein At1g70960 (369 aa).

An F-box domain is found at 3–54 (NTSFETLPRHMQMEILSRVPLKFLMKFMCVSKKWASIIRGEEFREDYLFQSM).

The sequence is that of Putative F-box protein At1g70960 from Arabidopsis thaliana (Mouse-ear cress).